The sequence spans 208 residues: Small ribosomal subunit protein uS4 (208 aa).

Positions 98–161 (RRLDNVIYRL…RKIPVIAEAQ (64 aa)) constitute an S4 RNA-binding domain.

It belongs to the universal ribosomal protein uS4 family. In terms of assembly, part of the 30S ribosomal subunit. Contacts protein S5. The interaction surface between S4 and S5 is involved in control of translational fidelity.

One of the primary rRNA binding proteins, it binds directly to 16S rRNA where it nucleates assembly of the body of the 30S subunit. In terms of biological role, with S5 and S12 plays an important role in translational accuracy. In Nitratidesulfovibrio vulgaris (strain DSM 19637 / Miyazaki F) (Desulfovibrio vulgaris), this protein is Small ribosomal subunit protein uS4.